A 349-amino-acid polypeptide reads, in one-letter code: Protein RecA (349 aa).

Residue 66-73 (GPESSGKT) coordinates ATP.

It belongs to the RecA family.

The protein localises to the cytoplasm. In terms of biological role, can catalyze the hydrolysis of ATP in the presence of single-stranded DNA, the ATP-dependent uptake of single-stranded DNA by duplex DNA, and the ATP-dependent hybridization of homologous single-stranded DNAs. It interacts with LexA causing its activation and leading to its autocatalytic cleavage. This is Protein RecA from Psychrobacter sp. (strain PRwf-1).